A 226-amino-acid chain; its full sequence is MYSIKCDDNKVMPRERLMRLGAESLSNQELLAILLRTGNKEKHVLELSSYLLSHLDSLADFKKMSLQELQHLAGIGKVKAIEIKAMIELVSRILATDKTLTDSVLTSVQVAEKIMAALGDKKQEHLVVLYLDNQNRIFEEKTIFIGTVRRSLAEPREILYYACKNMATSLIVIHNHPSGNIEPSSNDYCFTEKIKRSCEDLGIICLDHIIVSYKDYYSFREKSTLF.

Positions 103-225 (SVLTSVQVAE…YYSFREKSTL (123 aa)) constitute an MPN domain. His174, His176, and Asp187 together coordinate Zn(2+). The JAMM motif motif lies at 174-187 (HNHPSGNIEPSSND).

It belongs to the UPF0758 family.

The chain is UPF0758 protein SPs0978 from Streptococcus pyogenes serotype M3 (strain SSI-1).